The sequence spans 303 residues: Glutathione transport system permease protein GsiD (303 aa).

6 helical membrane-spanning segments follow: residues 40–60 (AMTAALFVILLIVVAIFARWI), 105–125 (LAAGVFAVFIGAAIGTLLGLL), 144–164 (LFAFPGILLAIAVVAVLGSGI), 165–185 (ANVIIAVAIFSIPAFARLVRG), 222–242 (IVVFFTMRIGTSIISAASLSF), and 266–286 (VIAPHVAVFPALAIFLTVLAF). The region spanning 101 to 290 (AQISLAAGVF…LTVLAFNLLG (190 aa)) is the ABC transmembrane type-1 domain.

It belongs to the binding-protein-dependent transport system permease family. In terms of assembly, the complex is composed of two ATP-binding proteins (GsiA), two transmembrane proteins (GsiC and GsiD) and a solute-binding protein (GsiB).

It localises to the cell inner membrane. Its function is as follows. Part of the ABC transporter complex GsiABCD involved in glutathione import. Probably responsible for the translocation of the substrate across the membrane. The polypeptide is Glutathione transport system permease protein GsiD (Escherichia coli O1:K1 / APEC).